The following is a 113-amino-acid chain: Photosystem II reaction center Psb28 protein (113 aa).

It belongs to the Psb28 family. Part of the photosystem II complex.

It localises to the cellular thylakoid membrane. In Prochlorococcus marinus (strain NATL2A), this protein is Photosystem II reaction center Psb28 protein.